The sequence spans 354 residues: Protein RecA (354 aa).

67–74 (GPESSGKT) contacts ATP. Residues 331–354 (GGANSSDSKTESDENIDLETGEVF) form a disordered region. The span at 343–354 (DENIDLETGEVF) shows a compositional bias: acidic residues.

The protein belongs to the RecA family.

Its subcellular location is the cytoplasm. In terms of biological role, can catalyze the hydrolysis of ATP in the presence of single-stranded DNA, the ATP-dependent uptake of single-stranded DNA by duplex DNA, and the ATP-dependent hybridization of homologous single-stranded DNAs. It interacts with LexA causing its activation and leading to its autocatalytic cleavage. The polypeptide is Protein RecA (Shewanella frigidimarina (strain NCIMB 400)).